Consider the following 359-residue polypeptide: Transcription factor bHLH130 (359 aa).

Serine 60 is modified (phosphoserine). A disordered region spans residues 161–186; it reads EEDEESPSNSNGLRRHCSLSSRPPSS. The segment covering 167-184 has biased composition (polar residues); that stretch reads PSNSNGLRRHCSLSSRPP. In terms of domain architecture, bHLH spans 285–335; it reads CATHPRSIAERVRRTRISERMRKLQELVPNMDKQTNTSDMLDLAVDYIKDL.

In terms of assembly, homodimer.

It localises to the nucleus. The polypeptide is Transcription factor bHLH130 (BHLH130) (Arabidopsis thaliana (Mouse-ear cress)).